The chain runs to 252 residues: Methionine aminopeptidase (252 aa).

His-76 contributes to the substrate binding site. Residues Asp-93, Asp-104, and His-168 each coordinate a divalent metal cation. A substrate-binding site is contributed by His-175. A divalent metal cation contacts are provided by Glu-202 and Glu-233.

It belongs to the peptidase M24A family. Methionine aminopeptidase type 1 subfamily. In terms of assembly, monomer. It depends on Co(2+) as a cofactor. Requires Zn(2+) as cofactor. The cofactor is Mn(2+). Fe(2+) is required as a cofactor.

It catalyses the reaction Release of N-terminal amino acids, preferentially methionine, from peptides and arylamides.. In terms of biological role, removes the N-terminal methionine from nascent proteins. The N-terminal methionine is often cleaved when the second residue in the primary sequence is small and uncharged (Met-Ala-, Cys, Gly, Pro, Ser, Thr, or Val). Requires deformylation of the N(alpha)-formylated initiator methionine before it can be hydrolyzed. The protein is Methionine aminopeptidase of Staphylococcus aureus (strain MRSA252).